The chain runs to 104 residues: Urease subunit beta (104 aa).

Belongs to the urease beta subunit family. As to quaternary structure, heterotrimer of UreA (gamma), UreB (beta) and UreC (alpha) subunits. Three heterotrimers associate to form the active enzyme.

The protein resides in the cytoplasm. The catalysed reaction is urea + 2 H2O + H(+) = hydrogencarbonate + 2 NH4(+). It participates in nitrogen metabolism; urea degradation; CO(2) and NH(3) from urea (urease route): step 1/1. This chain is Urease subunit beta, found in Mycolicibacterium vanbaalenii (strain DSM 7251 / JCM 13017 / BCRC 16820 / KCTC 9966 / NRRL B-24157 / PYR-1) (Mycobacterium vanbaalenii).